Reading from the N-terminus, the 328-residue chain is MPSPRLRFGVLGAADIALRRTVPALLAHPDVTVVAVSSRDTARAARFAAAFGCEAVPGHQALLDRDDIDALYVPLPVMVHTPWVEAALLRGRHVLVEKPLTATRSGAEDLIALARSRGLVLMENFTSLHHAQHGTVTDLLRDGTIGELRSLSAAFTIPPKPEGDIRYQPDVGGGALLDIGIYPLRAALHFLGPDLHAAGAVLRRERRRNVVVSGHVLLTTPHGVVAELAFGMEHAYRSEYTLFGTAGRLRLDRAFTPPETHRPRVEIHRQDALDIVDLPPDAQFANLVRDFVLAVREGPGRLTQHHADAVRQADLVERVMAVARVRWC.

Residue Arg20 participates in substrate binding. NADP(+)-binding positions include 38–39 (SR), Leu75, and His80. The Proton donor role is filled by Lys98. NADP(+) is bound by residues Arg166 and Asp178. Tyr236 and Thr256 together coordinate substrate.

It belongs to the Gfo/Idh/MocA family.

The enzyme catalyses dTDP-4-dehydro-2,6-dideoxy-alpha-D-glucose + NADP(+) = dTDP-3,4-didehydro-2,6-dideoxy-alpha-D-glucose + NADPH + H(+). It participates in antibiotic biosynthesis. Functionally, involved in the biosynthesis of one of the two 2,6-deoxysugars, dTDP-L-oleandrose, attached to the macrolactone ring oleandolide to produce the aglycone antibiotic oleandomycin. Catalyzes the reduction of the C-3 keto moiety of dTDP-3,4-diketo-2,6-dideoxy-alpha-D-glucose to yield dTDP-4-keto-2,6-dideoxy-alpha-D-glucose. NADPH is the better reductant, however NADH can also be used. The polypeptide is dTDP-3,4-didehydro-2,6-dideoxy-alpha-D-glucose 3-reductase (Streptomyces antibioticus).